A 590-amino-acid polypeptide reads, in one-letter code: Aspartate--tRNA ligase (590 aa).

Glu174 lines the L-aspartate pocket. The tract at residues 198–201 (QLMK) is aspartate. Arg220 contributes to the L-aspartate binding site. Residues 220-222 (RDE) and Gln229 each bind ATP. His443 is an L-aspartate binding site. Glu484 serves as a coordination point for ATP. Arg491 is an L-aspartate binding site. 536–539 (GLDR) contacts ATP.

Belongs to the class-II aminoacyl-tRNA synthetase family. Type 1 subfamily. In terms of assembly, homodimer.

The protein resides in the cytoplasm. The enzyme catalyses tRNA(Asp) + L-aspartate + ATP = L-aspartyl-tRNA(Asp) + AMP + diphosphate. In terms of biological role, catalyzes the attachment of L-aspartate to tRNA(Asp) in a two-step reaction: L-aspartate is first activated by ATP to form Asp-AMP and then transferred to the acceptor end of tRNA(Asp). In Lactococcus lactis subsp. lactis (strain IL1403) (Streptococcus lactis), this protein is Aspartate--tRNA ligase.